A 276-amino-acid polypeptide reads, in one-letter code: Ribosomal RNA small subunit methyltransferase A (276 aa).

S-adenosyl-L-methionine is bound by residues Asn-27, Leu-29, Gly-54, Glu-75, Asp-101, and Asn-122.

Belongs to the class I-like SAM-binding methyltransferase superfamily. rRNA adenine N(6)-methyltransferase family. RsmA subfamily.

Its subcellular location is the cytoplasm. It carries out the reaction adenosine(1518)/adenosine(1519) in 16S rRNA + 4 S-adenosyl-L-methionine = N(6)-dimethyladenosine(1518)/N(6)-dimethyladenosine(1519) in 16S rRNA + 4 S-adenosyl-L-homocysteine + 4 H(+). In terms of biological role, specifically dimethylates two adjacent adenosines (A1518 and A1519) in the loop of a conserved hairpin near the 3'-end of 16S rRNA in the 30S particle. May play a critical role in biogenesis of 30S subunits. In Brucella suis (strain ATCC 23445 / NCTC 10510), this protein is Ribosomal RNA small subunit methyltransferase A.